Consider the following 135-residue polypeptide: UPF0102 protein RPC_0320 (135 aa).

The protein belongs to the UPF0102 family.

This is UPF0102 protein RPC_0320 from Rhodopseudomonas palustris (strain BisB18).